The chain runs to 294 residues: MKDRLQELKQRTKEIELSRDSHVSTTETEEQGVFLQQAVIYEREPVAERHLHEIQKLQESINNLADNVQKFGQQQKSLVASMRRFSLLKRESTVTKEVKIQAEYINRSLNDLVKEVKKSEVENGPSSVVTRILKSQHAAMFCHFQQIMFIYNDTIAAKQEKCKTFILRQLEVAGKEMSEEDVNDMLHQGKWEVFNESLLTEINITKAQLSEIEQRHKELVNLENQIKDLRDLFIQLSLLVEEQGESINNIEMTVNSTKEYVNNTKEKFGLAVKYKKRNPCRVLCCWCCPCCSSK.

Residues 209 to 271 (LSEIEQRHKE…NNTKEKFGLA (63 aa)) enclose the t-SNARE coiled-coil homology domain.

Belongs to the syntaxin family. In terms of assembly, interacts with EGFR.

The protein localises to the cell membrane. The protein resides in the cytoplasm. Plays a role in endosomal trafficking of the epidermal growth factor receptor (EGFR). This is Syntaxin-19 (STX19) from Pongo abelii (Sumatran orangutan).